The sequence spans 351 residues: Nicotinate-nucleotide--dimethylbenzimidazole phosphoribosyltransferase (351 aa).

Glu317 acts as the Proton acceptor in catalysis.

Belongs to the CobT family.

The catalysed reaction is 5,6-dimethylbenzimidazole + nicotinate beta-D-ribonucleotide = alpha-ribazole 5'-phosphate + nicotinate + H(+). The protein operates within nucleoside biosynthesis; alpha-ribazole biosynthesis; alpha-ribazole from 5,6-dimethylbenzimidazole: step 1/2. In terms of biological role, catalyzes the synthesis of alpha-ribazole-5'-phosphate from nicotinate mononucleotide (NAMN) and 5,6-dimethylbenzimidazole (DMB). This is Nicotinate-nucleotide--dimethylbenzimidazole phosphoribosyltransferase from Pseudomonas putida (strain ATCC 700007 / DSM 6899 / JCM 31910 / BCRC 17059 / LMG 24140 / F1).